The chain runs to 257 residues: uncharacterized protein (257 aa).

Residues leucine 7–threonine 27 form a helical membrane-spanning segment.

The protein belongs to the staphylococcal tandem lipoprotein family.

It localises to the cell membrane. This is an uncharacterized protein from Staphylococcus aureus (strain Mu50 / ATCC 700699).